We begin with the raw amino-acid sequence, 352 residues long: MLSLQAMAKMAVATNTYSKYHYPILKVFGLWWKNNTLNGPIKICNHCNNITVGEYPMCYNHGMSMDVALIRAVKDRNISLIQLFTEWGGNIDYGALCANTPSMQRLCESLGAKPPKGRMYMDTLIHLSDTLNDNDLIRGYEIFDDNSVLDYVNLVRLKIMLTLKARIPLMEQLDQIALKQLLQRYWYAMAVQHNLRIAIHYFDNHIPNIKPFSLRCALYFNDPFKIHDACRTVTMDPNEMMNIACQQDLNFQSIYYCYLLGADINQAMLMSLNYGNLSNMWFCIDLGANVFKEARALAGKKNRRVLQYILGLNIFKRELIPPCKDPDPSQIQILLKNYILKNVSTVFTYYCQ.

The protein belongs to the asfivirus MGF 360 family.

Functionally, plays a role in virus cell tropism, and may be required for efficient virus replication in macrophages. In Ornithodoros (relapsing fever ticks), this protein is Protein MGF 360-16R.